Reading from the N-terminus, the 1358-residue chain is MIGKGGFGVVVKSRNKLDCRYYAIKKIKTKGYTDSNQEPLTNKLLREVTTLSRLHHQFVVRYYQAWIEKSCDSFQSLEEGNEDLSGDLETDASEDWFMQSSINSRSIISRDSYSGLSTSNSNVGGANNTAGGGDSVSNANSNKSMIVGNNNKKLTLSSSNTSSSSSLLSNNKSKILNTSKSTSTNTSTSTSTSNTNKNKKISKKKKSKLSPLMKPKNKKNKNNGESEQSSSDSENGENGMKSRIIENASDSYSDDDNNNNNDSNNNYHSDNESDSFSGSISMSDGNGSGYEATDDEDIINNSGSFDDNENDDDDEEDDDDEYDEEDDDYETFDFQDKSRVVSNNSKLSTSSSRKKPPKETHTLYIQMEYCSKKTLKTLIDNVGGIAEEEAFRLLRQIVEGLNHIHSQQIIHRDLKPANIFIDNEQNVKIGDFGLATSGAPVSKSDDLNSSTSNAANNINLSSSTNSTAQQTPMWDLNDENLSMTGGVGTPFYCCPEILEKNTKHYGTKVDMYSLGIIFFEMCFQFQTQMERSNILRDLRDNLKFPPGFESTKPDQTQIIRSLLSRDPTQRPSTKQLLESGLLPSKMEDDILKEAIKTIANPTISLFSYLMEKLFCLSNDEHIMSRYLYTSNPSLTPMHLICREKTFSRLEKIFLNHGSIRIDTPTLFPKNPTNSTHPGAANVAKFLDESGTVVYLPYDLTIPWARHVVIHNIQQAKRYTFSKVYRRSQPGFSPKELYECDFDIIGPSKSRHISDAETLRIIIEIMEEFKDELFGNNSGSNSGSGSGGSINYKIRINHYGLLDSILSECGVEKRFFTVVYQTVAQLHWRLNWAQVAQSLKEHGLSASIVSNISTYFRQRGELAQCVTQLESLLANHKEATTGISDLKILVRNLQMINIIPRFLLDLSLIHNHQYYEGLVFQAYIERPTLSNPSRTEIIMSGGRYDKLIKSLHPNPSLSNNIVSGVGVTLACEKIVNSVLNYRQHLLNNCFNTTYTRRNKDPPNSNNNPNNNNLNNNVSIFTKFQSHIEVFVCSLGSSLLGEKLQVASQLWSAGIKADYSQTDYYSSEDIYSNCRENGIPWVVILREKAFQIGKLKVKQIETRQERTVARKDLVDFFLKSRKHNVDSKNIIQNTSSSDLSNLIGGINNSGSGGSGGSGGGSSMSSGGGGGGNSNIGGSDHHHHGHHSNQSTSSSGNSNNSNTQQTSPIQHHVHFSNTKSIIGSSGIISNATFSGGSSSSSNIIHFDEPTDSFSTQIVYQGVEEIKKSKIETLVQTSLSKLFRGFIQSKSSTIRVIVTDLAYSVIRDLQISESHDNISKFQRVSKEKLLQLKNQIFKWKVYPFIVIHSIKDDKSVIFNSVV.

Residues 1–582 enclose the Protein kinase domain; that stretch reads MIGKGGFGVV…TKQLLESGLL (582 aa). Residues 2–10 and K25 each bind ATP; that span reads IGKGGFGVV. A disordered region spans residues 125–359; that stretch reads GANNTAGGGD…SSSRKKPPKE (235 aa). Positions 136–148 are enriched in polar residues; sequence VSNANSNKSMIVG. Over residues 149–196 the composition is skewed to low complexity; it reads NNNKKLTLSSSNTSSSSSLLSNNKSKILNTSKSTSTNTSTSTSTSNTN. Over residues 197–208 the composition is skewed to basic residues; it reads KNKKISKKKKSK. Low complexity predominate over residues 258 to 285; that stretch reads NNNNDSNNNYHSDNESDSFSGSISMSDG. The span at 306-333 shows a compositional bias: acidic residues; sequence DDNENDDDDEEDDDDEYDEEDDDYETFD. Residues 342–351 show a composition bias toward low complexity; sequence SNNSKLSTSS. The active-site Proton acceptor is the D413. Disordered regions lie at residues 445–470 and 1148–1204; these read DDLN…TAQQ and GSGG…QQTS. Residues 447–466 show a composition bias toward low complexity; sequence LNSSTSNAANNINLSSSTNS. The span at 1148 to 1172 shows a compositional bias: gly residues; sequence GSGGSGGSGGGSSMSSGGGGGGNSN. The span at 1185 to 1199 shows a compositional bias: low complexity; sequence SNQSTSSSGNSNNSN.

This sequence belongs to the protein kinase superfamily. Ser/Thr protein kinase family. GCN2 subfamily.

It catalyses the reaction L-seryl-[protein] + ATP = O-phospho-L-seryl-[protein] + ADP + H(+). It carries out the reaction L-threonyl-[protein] + ATP = O-phospho-L-threonyl-[protein] + ADP + H(+). This chain is Probable serine/threonine-protein kinase ifkB (ifkB), found in Dictyostelium discoideum (Social amoeba).